The primary structure comprises 2234 residues: Bridge-like lipid transfer protein family member 2 (2234 aa).

A signal peptide spans 1 to 31 (MPLFLSALLVLLLVALSALFLGRWLVVRLAT). Residues 29–108 (LATRWCQRKL…LQKVSSLSAP (80 aa)) form a transmembrane domain region. Ser-563 is modified (phosphoserine). The tract at residues 1496-1529 (QMSAKKPKRGIPPSAQVPPHVSTPSFSGRPDKGS) is disordered. Positions 1814 to 1885 (ILHLQEAVRQ…LNILIRCFKD (72 aa)) form a coiled coil. A phosphoserine mark is found at Ser-1846 and Ser-2090.

The protein belongs to the SABRE family.

It is found in the cell membrane. The protein resides in the endoplasmic reticulum membrane. It localises to the mitochondrion membrane. In terms of biological role, tube-forming lipid transport protein which binds to phosphatidylinositols and affects phosphatidylinositol-4,5-bisphosphate (PtdIns-4,5-P2) distribution. This is Bridge-like lipid transfer protein family member 2 (Bltp2) from Mus musculus (Mouse).